The chain runs to 275 residues: Elongation factor Ts (275 aa).

The segment at 76-79 is involved in Mg(2+) ion dislocation from EF-Tu; that stretch reads TDFV.

It belongs to the EF-Ts family.

It localises to the cytoplasm. Associates with the EF-Tu.GDP complex and induces the exchange of GDP to GTP. It remains bound to the aminoacyl-tRNA.EF-Tu.GTP complex up to the GTP hydrolysis stage on the ribosome. In Corynebacterium diphtheriae (strain ATCC 700971 / NCTC 13129 / Biotype gravis), this protein is Elongation factor Ts.